The following is a 330-amino-acid chain: Probable cytosolic iron-sulfur protein assembly protein ciao1 (330 aa).

WD repeat units lie at residues 14 to 53, 59 to 98, 103 to 142, 148 to 187, 192 to 231, 244 to 283, and 295 to 330; these read HPDSRCWYVAWNPAGTTLATCGGDRAIRIWGKEGDSWECK, GHQRTVRKVAWSPCGKYLASASFDATTCIWKKTDEDFECL, GHENEVKCVAWAPSGSLLATCSRDKSVWIWEVDEEDEYEC, SHTQDVKHVVWHPTQELLASASYDNKICIYKEEDDDWECR, GHESTVWSLTFDPEGRRLASCSDDRTVKIWKESTTGDGSS, FHGRTIYDIAWCRLTGALATACGDDGVRVFSEDPTADPEQ, and AHNQDVNCVSWNPKEAGLLATCSDNGEFAIWKYNSA.

Belongs to the WD repeat CIA1 family. As to quaternary structure, component of the CIA complex.

Key component of the cytosolic iron-sulfur protein assembly (CIA) complex, a multiprotein complex that mediates the incorporation of iron-sulfur cluster into extramitochondrial Fe/S proteins. This is Probable cytosolic iron-sulfur protein assembly protein ciao1 (ciao1) from Danio rerio (Zebrafish).